A 512-amino-acid chain; its full sequence is Acid-sensing ion channel 2 (512 aa).

The Cytoplasmic portion of the chain corresponds to 1–42; that stretch reads MDLKESPSEGSLQPSSIQIFANTSTLHGIRHIFVYGPLTIRR. Residues Ser8 and Ser11 each carry the phosphoserine modification. Residues 43-64 traverse the membrane as a helical segment; the sequence is VLWAVAFVGSLGLLLVESSERV. Topologically, residues 65–424 are extracellular; it reads SYYFSYQHVT…ETIEQKKAYE (360 aa). 6 disulfide bridges follow: Cys92–Cys193, Cys289–Cys364, Cys307–Cys360, Cys311–Cys358, Cys320–Cys342, and Cys322–Cys334. Residues Asn365 and Asn392 are each glycosylated (N-linked (GlcNAc...) asparagine). The chain crosses the membrane as a helical span at residues 425–439; that stretch reads VAALLGDIGGQMGLF. Residues 440–512 lie on the Cytoplasmic side of the membrane; sequence IGASILTILE…TLGTLEEIAC (73 aa). The GAS motif; ion selectivity filter signature appears at 441-443; the sequence is GAS.

The protein belongs to the amiloride-sensitive sodium channel (TC 1.A.6) family. ASIC2 subfamily. In terms of assembly, can form homotrimers. Heterotrimer; forms functional heterotrimers producing channel with different properties. Forms heterotrimers with ASIC1; while ASIC1 determines current amplitude, ASIC2 influences the properties of the current. Forms heterotrimers with ASIC3; resulting in channels with distinct properties. Interacts with STOM; STOM regulates the gating of ASIC2-containing channels. Interacts with PICK1; promotes ASIC3 phosphorylation by PKC and activation of ASIC2/ASIC3 heterotrimers. Expressed in brain, cerebellum, trigeminal sensory ganglia and also detected in testis.

It localises to the cell membrane. The enzyme catalyses Na(+)(in) = Na(+)(out). The catalysed reaction is K(+)(in) = K(+)(out). It catalyses the reaction Li(+)(in) = Li(+)(out). Inhibited by the diuretic drug amiloride. Inhibited by gadolinium ions, the heterotrimer with ASIC3 being more sensitive. Heterotrimer composed of ASIC1 and ASIC2 are inhibited by the snake venom mambalgin-1. Its function is as follows. Forms pH-gated trimeric sodium channels that act as postsynaptic excitatory sensors in the nervous system. Upon extracellular acidification, these channels generate rapid, transient inward currents that fully desensitize. Highly selective for sodium, they are permeable to other cations. By forming heterotrimeric channels with ASIC1, could contribute to synaptic plasticity, learning, and memory. Additionally, as acid sensors at nerve terminals, plays a role in mechanosensation and phototransduction. This Homo sapiens (Human) protein is Acid-sensing ion channel 2.